The sequence spans 250 residues: Golgi SNAP receptor complex member 1 (250 aa).

Position 2 is an N-acetylalanine (Ala-2). The Cytoplasmic portion of the chain corresponds to 2-229 (AAGTSNYWED…QRINLRKRRD (228 aa)). Residues 9 to 30 (WEDLRKQARQLENELDLKLVSF) adopt a coiled-coil conformation. Residues 38–59 (SHSSARDGGRDRYSSDTTPLLN) form a disordered region. Residues 41 to 51 (SARDGGRDRYS) are compositionally biased toward basic and acidic residues. Residues 68–95 (ETMAIEIEQLLARLTGVNDKMAEYTNSA) adopt a coiled-coil conformation. At Ser-141 the chain carries Phosphoserine. A helical; Anchor for type IV membrane protein membrane pass occupies residues 230-250 (SLILGGVIGICTILLLLYAFH).

This sequence belongs to the GOSR1 family. As to quaternary structure, component of several multiprotein Golgi SNARE complexes. Identified in a SNARE complex with BET1, STX5 and YKT6, in a SNARE complex with BET1L, STX5 and YKT6, in a SNARE complex with STX5, GOSR2, SEC22B and BET1, and in complex with STX5 and COG3. Interacts with GABARAPL2.

Its subcellular location is the golgi apparatus membrane. Functionally, involved in transport from the ER to the Golgi apparatus as well as in intra-Golgi transport. It belongs to a super-family of proteins called t-SNAREs or soluble NSF (N-ethylmaleimide-sensitive factor) attachment protein receptor. May play a protective role against hydrogen peroxide induced cytotoxicity under glutathione depleted conditions in neuronal cells by regulating the intracellular ROS levels via inhibition of p38 MAPK (MAPK11, MAPK12, MAPK13 and MAPK14). Participates in docking and fusion stage of ER to cis-Golgi transport. Plays an important physiological role in VLDL-transport vesicle-Golgi fusion and thus in VLDL delivery to the hepatic cis-Golgi. This Cricetulus griseus (Chinese hamster) protein is Golgi SNAP receptor complex member 1 (GOSR1).